Here is a 380-residue protein sequence, read N- to C-terminus: tRNA-specific 2-thiouridylase MnmA (380 aa).

ATP contacts are provided by residues 10-17 (AMSGGVDS) and Leu36. Cys106 serves as the catalytic Nucleophile. Cys106 and Cys202 are oxidised to a cystine. An ATP-binding site is contributed by Gly130. The interval 152–154 (KNQ) is interaction with tRNA. Cys202 functions as the Cysteine persulfide intermediate in the catalytic mechanism. An interaction with tRNA region spans residues 308–309 (RY).

This sequence belongs to the MnmA/TRMU family.

The protein resides in the cytoplasm. It carries out the reaction S-sulfanyl-L-cysteinyl-[protein] + uridine(34) in tRNA + AH2 + ATP = 2-thiouridine(34) in tRNA + L-cysteinyl-[protein] + A + AMP + diphosphate + H(+). In terms of biological role, catalyzes the 2-thiolation of uridine at the wobble position (U34) of tRNA, leading to the formation of s(2)U34. The polypeptide is tRNA-specific 2-thiouridylase MnmA (Leptospira biflexa serovar Patoc (strain Patoc 1 / Ames)).